We begin with the raw amino-acid sequence, 311 residues long: Methionyl-tRNA formyltransferase (311 aa).

Residue Ser-110–Pro-113 coordinates (6S)-5,6,7,8-tetrahydrofolate.

This sequence belongs to the Fmt family.

It catalyses the reaction L-methionyl-tRNA(fMet) + (6R)-10-formyltetrahydrofolate = N-formyl-L-methionyl-tRNA(fMet) + (6S)-5,6,7,8-tetrahydrofolate + H(+). Attaches a formyl group to the free amino group of methionyl-tRNA(fMet). The formyl group appears to play a dual role in the initiator identity of N-formylmethionyl-tRNA by promoting its recognition by IF2 and preventing the misappropriation of this tRNA by the elongation apparatus. In Streptococcus mutans serotype c (strain ATCC 700610 / UA159), this protein is Methionyl-tRNA formyltransferase.